The primary structure comprises 390 residues: S-adenosylmethionine synthase 2 (390 aa).

Residue glutamate 9 coordinates Mg(2+). An ATP-binding site is contributed by histidine 15. Residue glutamate 43 coordinates K(+). Positions 56 and 99 each coordinate L-methionine. Residues aspartate 167–lysine 169, serine 235–phenylalanine 238, aspartate 246, arginine 252–lysine 253, alanine 269, lysine 273, and lysine 277 each bind ATP. Aspartate 246 provides a ligand contact to L-methionine. Lysine 277 lines the L-methionine pocket.

Belongs to the AdoMet synthase family. As to quaternary structure, homotetramer. It depends on Mn(2+) as a cofactor. The cofactor is Mg(2+). Co(2+) is required as a cofactor. Requires K(+) as cofactor.

It is found in the cytoplasm. The enzyme catalyses L-methionine + ATP + H2O = S-adenosyl-L-methionine + phosphate + diphosphate. The protein operates within amino-acid biosynthesis; S-adenosyl-L-methionine biosynthesis; S-adenosyl-L-methionine from L-methionine: step 1/1. Catalyzes the formation of S-adenosylmethionine from methionine and ATP. The reaction comprises two steps that are both catalyzed by the same enzyme: formation of S-adenosylmethionine (AdoMet) and triphosphate, and subsequent hydrolysis of the triphosphate. In Nicotiana tabacum (Common tobacco), this protein is S-adenosylmethionine synthase 2 (SAMS2).